The primary structure comprises 221 residues: Uracil-DNA glycosylase (221 aa).

The Proton acceptor role is filled by Asp64.

The protein belongs to the uracil-DNA glycosylase (UDG) superfamily. UNG family.

It localises to the cytoplasm. It catalyses the reaction Hydrolyzes single-stranded DNA or mismatched double-stranded DNA and polynucleotides, releasing free uracil.. In terms of biological role, excises uracil residues from the DNA which can arise as a result of misincorporation of dUMP residues by DNA polymerase or due to deamination of cytosine. This chain is Uracil-DNA glycosylase, found in Mycoplasmopsis pulmonis (strain UAB CTIP) (Mycoplasma pulmonis).